The primary structure comprises 427 residues: Trigger factor (427 aa).

The 86-residue stretch at 163-248 (GDTVVIDFVG…IHEVKAKEVP (86 aa)) folds into the PPIase FKBP-type domain.

The protein belongs to the FKBP-type PPIase family. Tig subfamily.

Its subcellular location is the cytoplasm. The catalysed reaction is [protein]-peptidylproline (omega=180) = [protein]-peptidylproline (omega=0). Its function is as follows. Involved in protein export. Acts as a chaperone by maintaining the newly synthesized protein in an open conformation. Functions as a peptidyl-prolyl cis-trans isomerase. The chain is Trigger factor from Streptococcus pneumoniae (strain JJA).